The primary structure comprises 1129 residues: A-kinase anchor protein 11 (1129 aa).

Basic residues predominate over residues 1–12 (MQKMQCHLRRPL). The interval 1-21 (MQKMQCHLRRPLHSSSSFSSQ) is disordered. A phosphothreonine mark is found at Thr-251 and Thr-363. Disordered regions lie at residues 354–376 (IRDR…QTSS), 394–416 (EFAP…SENE), and 434–455 (SEEV…SEHS). The segment covering 404-416 (PHNSSVGSLSENE) has biased composition (polar residues). Ser-434, Ser-439, and Ser-440 each carry phosphoserine. Residues 442–455 (GEEHPEMDVKSEHS) are compositionally biased toward basic and acidic residues. Ser-595 is modified (phosphoserine). The residue at position 742 (Thr-742) is a Phosphothreonine. Ser-835 bears the Phosphoserine mark. Residues 905 to 918 (LAEKIVAEAIEKAE) are PKA-RII binding region. The segment at 962 to 1061 (SKEVEDFQST…QEDGAEGLQP (100 aa)) is disordered. Positions 968–995 (FQSTESLGSQQMNLSVGEDSTGSWSNLS) are enriched in polar residues. Over residues 1002-1011 (DESSSFHHLS) the composition is skewed to basic and acidic residues. Over residues 1012–1028 (ESSNGNSSSWSSLGLEG) the composition is skewed to low complexity. The segment covering 1033–1042 (NNLSFPTSDS) has biased composition (polar residues). Positions 1043–1056 (DGPDDRESEQEDGA) are enriched in acidic residues.

Expressed in brain and testis.

Its subcellular location is the peroxisome. In terms of biological role, binds to type II regulatory subunits of protein kinase A and anchors/targets them. In Rattus norvegicus (Rat), this protein is A-kinase anchor protein 11 (Akap11).